The following is a 104-amino-acid chain: Pole-localizer protein TmaR (104 aa).

2 coiled-coil regions span residues 7–34 (IVNQARRKNKLKRELLDNEKKVRDNRKR) and 76–96 (SAEISKARRDISRRIRELTEE).

This sequence belongs to the pole-localizer TmaR family.

It localises to the cytoplasm. In terms of biological role, pole-localizer protein involved in the regulation of several cellular processes. This is Pole-localizer protein TmaR from Vibrio atlanticus (strain LGP32) (Vibrio splendidus (strain Mel32)).